A 528-amino-acid chain; its full sequence is Na(+)/H(+) antiporter NhaB (528 aa).

11 helical membrane-spanning segments follow: residues 23 to 45, 66 to 86, 95 to 115, 130 to 164, 203 to 223, 241 to 261, 310 to 330, 349 to 369, 390 to 410, 448 to 468, and 475 to 495; these read FAILSFLAINPILFYLNPFIAGW, PGGLLAIEAVIIGMTSPTQVL, VLLLLVFMVAGIYFMKQLLLY, VSMLFCIASAFLSAFLDALTVIAVIITVAVGFYSI, LLMHAGVGTALGGVCTMVGEP, IRMSPVTVPVFFAGILTCFIV, LIVGLAFHLASVGLIGLSVII, EEALPFTALLAVFFAVVGVII, LVIFYIANGLLSMVSDNVFVG, ATPNGQAAFLFLLTSALAPLI, and MVMMALPYTIVLSIVGILAIE.

Belongs to the NhaB Na(+)/H(+) (TC 2.A.34) antiporter family.

The protein localises to the cell inner membrane. The catalysed reaction is 2 Na(+)(in) + 3 H(+)(out) = 2 Na(+)(out) + 3 H(+)(in). Its function is as follows. Na(+)/H(+) antiporter that extrudes sodium in exchange for external protons. This Shewanella amazonensis (strain ATCC BAA-1098 / SB2B) protein is Na(+)/H(+) antiporter NhaB.